We begin with the raw amino-acid sequence, 181 residues long: UPF0302 protein ABC1905 (181 aa).

It belongs to the UPF0302 family.

The polypeptide is UPF0302 protein ABC1905 (Shouchella clausii (strain KSM-K16) (Alkalihalobacillus clausii)).